Reading from the N-terminus, the 212-residue chain is Glycerol-3-phosphate acyltransferase (212 aa).

Helical transmembrane passes span 10–30, 90–110, 124–144, 150–170, and 171–191; these read FAAL…AVVV, GYGL…SLGF, FAVS…VAVV, LAAL…GGTI, and WPLN…LFYR.

Belongs to the PlsY family. As to quaternary structure, probably interacts with PlsX.

The protein resides in the cell inner membrane. The enzyme catalyses an acyl phosphate + sn-glycerol 3-phosphate = a 1-acyl-sn-glycero-3-phosphate + phosphate. Its pathway is lipid metabolism; phospholipid metabolism. Functionally, catalyzes the transfer of an acyl group from acyl-phosphate (acyl-PO(4)) to glycerol-3-phosphate (G3P) to form lysophosphatidic acid (LPA). This enzyme utilizes acyl-phosphate as fatty acyl donor, but not acyl-CoA or acyl-ACP. The protein is Glycerol-3-phosphate acyltransferase of Bordetella avium (strain 197N).